Reading from the N-terminus, the 342-residue chain is UDP-3-O-acylglucosamine N-acyltransferase (342 aa).

The active-site Proton acceptor is the His-234.

The protein belongs to the transferase hexapeptide repeat family. LpxD subfamily. As to quaternary structure, homotrimer.

It carries out the reaction a UDP-3-O-[(3R)-3-hydroxyacyl]-alpha-D-glucosamine + a (3R)-hydroxyacyl-[ACP] = a UDP-2-N,3-O-bis[(3R)-3-hydroxyacyl]-alpha-D-glucosamine + holo-[ACP] + H(+). It functions in the pathway bacterial outer membrane biogenesis; LPS lipid A biosynthesis. Functionally, catalyzes the N-acylation of UDP-3-O-acylglucosamine using 3-hydroxyacyl-ACP as the acyl donor. Is involved in the biosynthesis of lipid A, a phosphorylated glycolipid that anchors the lipopolysaccharide to the outer membrane of the cell. This chain is UDP-3-O-acylglucosamine N-acyltransferase, found in Oleidesulfovibrio alaskensis (strain ATCC BAA-1058 / DSM 17464 / G20) (Desulfovibrio alaskensis).